A 62-amino-acid chain; its full sequence is Photosystem II reaction center protein Z (62 aa).

Transmembrane regions (helical) follow at residues 8-28 and 41-61; these read ALFA…VVLA and FSGI…NSFV.

Belongs to the PsbZ family. PSII is composed of 1 copy each of membrane proteins PsbA, PsbB, PsbC, PsbD, PsbE, PsbF, PsbH, PsbI, PsbJ, PsbK, PsbL, PsbM, PsbT, PsbY, PsbZ, Psb30/Ycf12, at least 3 peripheral proteins of the oxygen-evolving complex and a large number of cofactors. It forms dimeric complexes.

Its subcellular location is the plastid. It localises to the chloroplast thylakoid membrane. In terms of biological role, may control the interaction of photosystem II (PSII) cores with the light-harvesting antenna, regulates electron flow through the 2 photosystem reaction centers. PSII is a light-driven water plastoquinone oxidoreductase, using light energy to abstract electrons from H(2)O, generating a proton gradient subsequently used for ATP formation. The polypeptide is Photosystem II reaction center protein Z (Chlorella vulgaris (Green alga)).